The primary structure comprises 206 residues: 3-isopropylmalate dehydratase small subunit (206 aa).

This sequence belongs to the LeuD family. LeuD type 1 subfamily. Heterodimer of LeuC and LeuD.

It carries out the reaction (2R,3S)-3-isopropylmalate = (2S)-2-isopropylmalate. It participates in amino-acid biosynthesis; L-leucine biosynthesis; L-leucine from 3-methyl-2-oxobutanoate: step 2/4. Catalyzes the isomerization between 2-isopropylmalate and 3-isopropylmalate, via the formation of 2-isopropylmaleate. This Acidobacterium capsulatum (strain ATCC 51196 / DSM 11244 / BCRC 80197 / JCM 7670 / NBRC 15755 / NCIMB 13165 / 161) protein is 3-isopropylmalate dehydratase small subunit.